Here is a 121-residue protein sequence, read N- to C-terminus: Large ribosomal subunit protein bL19 (121 aa).

The protein belongs to the bacterial ribosomal protein bL19 family.

Functionally, this protein is located at the 30S-50S ribosomal subunit interface and may play a role in the structure and function of the aminoacyl-tRNA binding site. In Mesomycoplasma hyopneumoniae (strain 232) (Mycoplasma hyopneumoniae), this protein is Large ribosomal subunit protein bL19.